We begin with the raw amino-acid sequence, 438 residues long: 23S rRNA (uracil(1939)-C(5))-methyltransferase RlmD (438 aa).

In terms of domain architecture, TRAM spans 10–68; it reads RVTTRQTITVKVHDLDSFGQGVAHHNGKALFVQGALPDEVAEVSIIEDKRHFSRGVATR. The [4Fe-4S] cluster site is built by C81, C87, C90, and C168. 6 residues coordinate S-adenosyl-L-methionine: Q271, F300, N305, E321, N348, and D369. C395 functions as the Nucleophile in the catalytic mechanism.

The protein belongs to the class I-like SAM-binding methyltransferase superfamily. RNA M5U methyltransferase family. RlmD subfamily.

It carries out the reaction uridine(1939) in 23S rRNA + S-adenosyl-L-methionine = 5-methyluridine(1939) in 23S rRNA + S-adenosyl-L-homocysteine + H(+). Catalyzes the formation of 5-methyl-uridine at position 1939 (m5U1939) in 23S rRNA. The chain is 23S rRNA (uracil(1939)-C(5))-methyltransferase RlmD from Erwinia tasmaniensis (strain DSM 17950 / CFBP 7177 / CIP 109463 / NCPPB 4357 / Et1/99).